Reading from the N-terminus, the 548-residue chain is Chaperonin GroEL (548 aa).

ATP is bound by residues 29–32, Lys-50, 86–90, Gly-414, 478–480, and Asp-494; these read TLGP, DGTTT, and NAA.

Belongs to the chaperonin (HSP60) family. Forms a cylinder of 14 subunits composed of two heptameric rings stacked back-to-back. Interacts with the co-chaperonin GroES.

The protein resides in the cytoplasm. It catalyses the reaction ATP + H2O + a folded polypeptide = ADP + phosphate + an unfolded polypeptide.. Its function is as follows. Together with its co-chaperonin GroES, plays an essential role in assisting protein folding. The GroEL-GroES system forms a nano-cage that allows encapsulation of the non-native substrate proteins and provides a physical environment optimized to promote and accelerate protein folding. The sequence is that of Chaperonin GroEL from Psychrobacter sp. (strain PRwf-1).